The following is a 240-amino-acid chain: Transposase for insertion sequence element IS3411 (240 aa).

The region spanning Val125–Arg240 is the Integrase catalytic domain.

Functionally, involved in the transposition of the insertion sequence. The sequence is that of Transposase for insertion sequence element IS3411 from Escherichia coli.